A 382-amino-acid polypeptide reads, in one-letter code: UDP-4-amino-4-deoxy-L-arabinose--oxoglutarate aminotransferase (382 aa).

Lys182 bears the N6-(pyridoxal phosphate)lysine mark.

Belongs to the DegT/DnrJ/EryC1 family. ArnB subfamily. As to quaternary structure, homodimer. Pyridoxal 5'-phosphate is required as a cofactor.

The catalysed reaction is UDP-4-amino-4-deoxy-beta-L-arabinose + 2-oxoglutarate = UDP-beta-L-threo-pentopyranos-4-ulose + L-glutamate. The protein operates within nucleotide-sugar biosynthesis; UDP-4-deoxy-4-formamido-beta-L-arabinose biosynthesis; UDP-4-deoxy-4-formamido-beta-L-arabinose from UDP-alpha-D-glucuronate: step 2/3. It functions in the pathway bacterial outer membrane biogenesis; lipopolysaccharide biosynthesis. Its function is as follows. Catalyzes the conversion of UDP-4-keto-arabinose (UDP-Ara4O) to UDP-4-amino-4-deoxy-L-arabinose (UDP-L-Ara4N). The modified arabinose is attached to lipid A and is required for resistance to polymyxin and cationic antimicrobial peptides. The protein is UDP-4-amino-4-deoxy-L-arabinose--oxoglutarate aminotransferase of Pectobacterium atrosepticum (strain SCRI 1043 / ATCC BAA-672) (Erwinia carotovora subsp. atroseptica).